Here is a 349-residue protein sequence, read N- to C-terminus: UDP-N-acetylenolpyruvoylglucosamine reductase (349 aa).

One can recognise an FAD-binding PCMH-type domain in the interval 17–187; the sequence is VNESADLIIQ…TAITLRLNKQ (171 aa). R163 is a catalytic residue. The Proton donor role is filled by S233. E328 is an active-site residue.

Belongs to the MurB family. The cofactor is FAD.

It is found in the cytoplasm. It carries out the reaction UDP-N-acetyl-alpha-D-muramate + NADP(+) = UDP-N-acetyl-3-O-(1-carboxyvinyl)-alpha-D-glucosamine + NADPH + H(+). The protein operates within cell wall biogenesis; peptidoglycan biosynthesis. Its function is as follows. Cell wall formation. The chain is UDP-N-acetylenolpyruvoylglucosamine reductase from Aliivibrio fischeri (strain ATCC 700601 / ES114) (Vibrio fischeri).